The primary structure comprises 440 residues: GTPase Obg (440 aa).

One can recognise an Obg domain in the interval 5-163 (STFVDQTKIE…RTLRLELKVL (159 aa)). The OBG-type G domain occupies 164–338 (ADVGLVGFPS…LMSRAADLVS (175 aa)). Residues 170 to 177 (GFPSVGKS), 195 to 199 (FTTLK), 217 to 220 (DLPG), 288 to 291 (SQMD), and 319 to 321 (SSV) contribute to the GTP site. 2 residues coordinate Mg(2+): S177 and T197. The OCT domain maps to 362-440 (YHRPEKMEFT…IGDFSFEFVQ (79 aa)).

The protein belongs to the TRAFAC class OBG-HflX-like GTPase superfamily. OBG GTPase family. Monomer. It depends on Mg(2+) as a cofactor.

It is found in the cytoplasm. An essential GTPase which binds GTP, GDP and possibly (p)ppGpp with moderate affinity, with high nucleotide exchange rates and a fairly low GTP hydrolysis rate. Plays a role in control of the cell cycle, stress response, ribosome biogenesis and in those bacteria that undergo differentiation, in morphogenesis control. The polypeptide is GTPase Obg (Lactobacillus delbrueckii subsp. bulgaricus (strain ATCC BAA-365 / Lb-18)).